Here is a 491-residue protein sequence, read N- to C-terminus: UDP-N-acetylmuramate--L-alanine ligase (491 aa).

126-132 (GTHGKTT) lines the ATP pocket.

The protein belongs to the MurCDEF family.

The protein resides in the cytoplasm. The enzyme catalyses UDP-N-acetyl-alpha-D-muramate + L-alanine + ATP = UDP-N-acetyl-alpha-D-muramoyl-L-alanine + ADP + phosphate + H(+). The protein operates within cell wall biogenesis; peptidoglycan biosynthesis. In terms of biological role, cell wall formation. The protein is UDP-N-acetylmuramate--L-alanine ligase of Salmonella arizonae (strain ATCC BAA-731 / CDC346-86 / RSK2980).